Consider the following 219-residue polypeptide: ATP-dependent Clp protease proteolytic subunit 1, mitochondrial (219 aa).

Residues 1 to 23 constitute a mitochondrion transit peptide; sequence MLRRILTTSSVRNLTSSTQARVG. The active-site Nucleophile is the Ser-118. His-143 is a catalytic residue.

Belongs to the peptidase S14 family. In terms of assembly, tetradecamer that assembles into a two heptameric rings with a central cavity.

It localises to the mitochondrion matrix. The enzyme catalyses Hydrolysis of proteins to small peptides in the presence of ATP and magnesium. alpha-casein is the usual test substrate. In the absence of ATP, only oligopeptides shorter than five residues are hydrolyzed (such as succinyl-Leu-Tyr-|-NHMec, and Leu-Tyr-Leu-|-Tyr-Trp, in which cleavage of the -Tyr-|-Leu- and -Tyr-|-Trp bonds also occurs).. Functionally, clp cleaves peptides in various proteins in a process that requires ATP hydrolysis. Clp may be responsible for a fairly general and central housekeeping function rather than for the degradation of specific substrates. This chain is ATP-dependent Clp protease proteolytic subunit 1, mitochondrial, found in Caenorhabditis briggsae.